Reading from the N-terminus, the 504-residue chain is L-carnitine/gamma-butyrobetaine antiporter (504 aa).

The next 12 helical transmembrane spans lie at 10–30 (IEPK…WLTV), 51–71 (WGWA…WLVF), 92–112 (IFMM…SIEI), 143–163 (GPLP…FFFV), 195–215 (FYLV…TPLV), 231–251 (LDAI…ACGL), 263–283 (SYLS…SFIM), 316–336 (WTVF…IFLA), 347–367 (LCFG…TVLG), 398–418 (WAAL…CFIA), 446–466 (LLVR…LLAL), and 475–495 (AIIA…LSFI).

This sequence belongs to the BCCT transporter (TC 2.A.15) family. CaiT subfamily. As to quaternary structure, homotrimer.

The protein localises to the cell inner membrane. The enzyme catalyses 4-(trimethylamino)butanoate(in) + (R)-carnitine(out) = 4-(trimethylamino)butanoate(out) + (R)-carnitine(in). Its pathway is amine and polyamine metabolism; carnitine metabolism. Catalyzes the exchange of L-carnitine for gamma-butyrobetaine. This chain is L-carnitine/gamma-butyrobetaine antiporter, found in Shigella flexneri serotype 5b (strain 8401).